We begin with the raw amino-acid sequence, 210 residues long: dTTP/UTP pyrophosphatase (210 aa).

The active-site Proton acceptor is Asp89.

The protein belongs to the Maf family. YhdE subfamily. Requires a divalent metal cation as cofactor.

The protein resides in the cytoplasm. The catalysed reaction is dTTP + H2O = dTMP + diphosphate + H(+). It carries out the reaction UTP + H2O = UMP + diphosphate + H(+). Functionally, nucleoside triphosphate pyrophosphatase that hydrolyzes dTTP and UTP. May have a dual role in cell division arrest and in preventing the incorporation of modified nucleotides into cellular nucleic acids. The protein is dTTP/UTP pyrophosphatase of Burkholderia lata (strain ATCC 17760 / DSM 23089 / LMG 22485 / NCIMB 9086 / R18194 / 383).